Consider the following 252-residue polypeptide: Mediator of RNA polymerase II transcription subunit 20 (252 aa).

It belongs to the Mediator complex subunit 20 family. As to quaternary structure, component of the Mediator complex, which includes at least CDK8, MED4, MED6, MED11, MED14, MED17, MED18, MED20, MED21, MED22, MED27, MED28, MED30 and MED31.

It localises to the nucleus. Functionally, component of the Mediator complex, a coactivator involved in the regulated transcription of nearly all RNA polymerase II-dependent genes. Mediator functions as a bridge to convey information from gene-specific regulatory proteins to the basal RNA polymerase II transcription machinery. Mediator is recruited to promoters by direct interactions with regulatory proteins and serves as a scaffold for the assembly of a functional preinitiation complex with RNA polymerase II and the general transcription factors. Required for activated transcription of the MtnA gene. The protein is Mediator of RNA polymerase II transcription subunit 20 (MED20) of Drosophila melanogaster (Fruit fly).